The chain runs to 163 residues: Lectin-like protein EP153R (163 aa).

Over 1–26 the chain is Cytoplasmic; the sequence is MFSNKKYIGLINKKEGLKKKIDDYSI. The chain crosses the membrane as a helical span at residues 27–47; the sequence is LIIGILIGTNILSLIINIIGE. Topologically, residues 48–163 are extracellular; that stretch reads INKPICYQNN…YTDLLFICSK (116 aa). A disulfide bridge links Cys-63 with Cys-74. A lectin-like region spans residues 63–162; sequence CPKDWVGYNN…HYTDLLFICS (100 aa). Asn-84, Asn-96, Asn-97, Asn-103, Asn-109, Asn-115, Asn-129, and Asn-135 each carry an N-linked (GlcNAc...) asparagine; by host glycan. Cysteines 92 and 161 form a disulfide.

The protein belongs to the asfivirus lectin-like protein family. In terms of assembly, homodimer.

It is found in the host endoplasmic reticulum membrane. Its function is as follows. Down-regulates MHC-I expression by impairing the appropriate configuration or presentation into the plasma membrane of the latter. Participates in viral hemadsorption, which may help viral spread. Reduces the transactivating activity of host TP53, thus inhibiting apoptosis. Non-essential for virus growth in swine macrophage cell cultures. In African swine fever virus (isolate Warthog/Namibia/Wart80/1980) (ASFV), this protein is Lectin-like protein EP153R.